A 202-amino-acid polypeptide reads, in one-letter code: Protein-methionine-sulfoxide reductase heme-binding subunit MsrQ (202 aa).

A run of 6 helical transmembrane segments spans residues 8 to 28, 42 to 62, 75 to 95, 110 to 130, 147 to 167, and 169 to 189; these read LAVFLGALAMPAWWLYQAWIF, LGLGALVLLLLTLAMTPLQKL, LGLWCFTYALLHLSAYCVFIL, PYIIVGMLGFICLFLLAITSN, LVYLILGLGLLHMLWVVRADL, and EWTLYAVVGASLMLLRLPSIA.

It belongs to the MsrQ family. Heterodimer of a catalytic subunit (MsrP) and a heme-binding subunit (MsrQ). The cofactor is FMN. Heme b serves as cofactor.

The protein localises to the cell inner membrane. Functionally, part of the MsrPQ system that repairs oxidized periplasmic proteins containing methionine sulfoxide residues (Met-O), using respiratory chain electrons. Thus protects these proteins from oxidative-stress damage caused by reactive species of oxygen and chlorine generated by the host defense mechanisms. MsrPQ is essential for the maintenance of envelope integrity under bleach stress, rescuing a wide series of structurally unrelated periplasmic proteins from methionine oxidation. MsrQ provides electrons for reduction to the reductase catalytic subunit MsrP, using the quinone pool of the respiratory chain. The chain is Protein-methionine-sulfoxide reductase heme-binding subunit MsrQ from Pseudomonas paraeruginosa (strain DSM 24068 / PA7) (Pseudomonas aeruginosa (strain PA7)).